The chain runs to 86 residues: MIOREX complex component 7 (86 aa).

Associates with the mitochondrial ribosome.

It is found in the mitochondrion. Its function is as follows. Component of MIOREX complexes, large expressome-like assemblies of ribosomes with factors involved in all the steps of post-transcriptional gene expression. This chain is MIOREX complex component 7, found in Saccharomyces cerevisiae (strain ATCC 204508 / S288c) (Baker's yeast).